Here is a 255-residue protein sequence, read N- to C-terminus: Small ribosomal subunit protein uS2 (255 aa).

The tract at residues 233-255 is disordered; sequence DFVAEEAASEESLEELAEIVEGK.

The protein belongs to the universal ribosomal protein uS2 family.

This Lactococcus lactis subsp. lactis (strain IL1403) (Streptococcus lactis) protein is Small ribosomal subunit protein uS2 (rpsB).